The following is a 163-amino-acid chain: Nucleotide-binding protein BPUM_1028 (163 aa).

This sequence belongs to the YajQ family.

In terms of biological role, nucleotide-binding protein. The polypeptide is Nucleotide-binding protein BPUM_1028 (Bacillus pumilus (strain SAFR-032)).